A 233-amino-acid polypeptide reads, in one-letter code: Large ribosomal subunit protein uL1 (233 aa).

This sequence belongs to the universal ribosomal protein uL1 family. Part of the 50S ribosomal subunit.

Functionally, binds directly to 23S rRNA. The L1 stalk is quite mobile in the ribosome, and is involved in E site tRNA release. Its function is as follows. Protein L1 is also a translational repressor protein, it controls the translation of the L11 operon by binding to its mRNA. This chain is Large ribosomal subunit protein uL1, found in Photorhabdus laumondii subsp. laumondii (strain DSM 15139 / CIP 105565 / TT01) (Photorhabdus luminescens subsp. laumondii).